Consider the following 433-residue polypeptide: Beta-agarase AgaA (433 aa).

Residues 1-20 (MRKITSILLTCVMGCTATYA) form the signal peptide. The GH16 domain maps to 21–295 (ADWDGVPVPA…WVRFYKPVPI (275 aa)). Glu-147 (nucleophile) is an active-site residue. The active-site Proton donor is the Glu-152. The region spanning 300–431 (TTVELGNFHN…QWNGDEIRFV (132 aa)) is the CBM6 domain.

Belongs to the glycosyl hydrolase 16 family. Monomer.

It localises to the periplasm. The enzyme catalyses Hydrolysis of (1-&gt;4)-beta-D-galactosidic linkages in agarose, giving the tetramer as the predominant product.. Activity is abolished by Hg(2+), Cu(2+), Pb(2+) and Zn(2+) ions, but is not affected by NaCl up to at least 1.0 M, Mg(2+), K(+) and Ca(2+). Not affected by iodoacetamide, p-chloromercuribenzoate, dithiothreitol, 2-mercaptoethanol, EDTA and sodium dodecyl sulfate. Inhibited by N-bromosuccinimide. Functionally, endo-type beta-agarase, which produces neoagarotetraose (NA4) as the main final product, with a small amount of neoagarohexaose (NA6) and neoagarobiose (NA2). The sequence is that of Beta-agarase AgaA from Microbulbifer thermotolerans.